A 245-amino-acid chain; its full sequence is 5'-nucleotidase SurE (245 aa).

A divalent metal cation is bound by residues Asp-8, Asp-9, Ser-39, and Asn-91.

This sequence belongs to the SurE nucleotidase family. A divalent metal cation is required as a cofactor.

It localises to the cytoplasm. It catalyses the reaction a ribonucleoside 5'-phosphate + H2O = a ribonucleoside + phosphate. In terms of biological role, nucleotidase that shows phosphatase activity on nucleoside 5'-monophosphates. The protein is 5'-nucleotidase SurE of Janthinobacterium sp. (strain Marseille) (Minibacterium massiliensis).